A 968-amino-acid chain; its full sequence is Alanine--tRNA ligase, cytoplasmic (968 aa).

Methionine 1 carries the post-translational modification N-acetylmethionine. Residues serine 3 and serine 8 each carry the phosphoserine modification. An N6-acetyllysine modification is found at lysine 19. Residues arginine 77, histidine 95, tryptophan 176, and 214-216 (IWN) each bind ATP. Residues asparagine 216 and aspartate 239 each contribute to the L-alanine site. ATP is bound at residue glycine 243. Phosphoserine is present on residues serine 399 and serine 555. Zn(2+) contacts are provided by histidine 605, histidine 609, cysteine 723, and histidine 727. The Nuclear localization signal signature appears at 750-763 (RRIVAVTGAEAQKA). Position 876 is an N6-acetyllysine (lysine 876). Lysine 943 is modified (N6,N6,N6-trimethyllysine; alternate). Lysine 943 carries the post-translational modification N6,N6-dimethyllysine; alternate. N6-methyllysine; alternate is present on lysine 943.

Belongs to the class-II aminoacyl-tRNA synthetase family. Monomer. Interacts with ANKRD16; the interaction is direct. Zn(2+) is required as a cofactor. Post-translationally, ISGylated. Methylation at 'Lys-943' by METTL21C.

The protein resides in the cytoplasm. It localises to the nucleus. It catalyses the reaction tRNA(Ala) + L-alanine + ATP = L-alanyl-tRNA(Ala) + AMP + diphosphate. It carries out the reaction (S)-lactate + ATP + H(+) = (S)-lactoyl-AMP + diphosphate. The catalysed reaction is (S)-lactoyl-AMP + L-lysyl-[protein] = N(6)-[(S)-lactoyl]-L-lysyl-[protein] + AMP + 2 H(+). The protein lactyltransferase activity is inhibited by beta-alanine. Catalyzes the attachment of alanine to tRNA(Ala) in a two-step reaction: alanine is first activated by ATP to form Ala-AMP and then transferred to the acceptor end of tRNA(Ala). Also edits incorrectly charged tRNA(Ala) via its editing domain. In presence of high levels of lactate, also acts as a protein lactyltransferase that mediates lactylation of lysine residues in target proteins, such as TEAD1, TP53/p53 and YAP1. Protein lactylation takes place in a two-step reaction: lactate is first activated by ATP to form lactate-AMP and then transferred to lysine residues of target proteins. Acts as an inhibitor of TP53/p53 activity by catalyzing lactylation of TP53/p53. Acts as a positive regulator of the Hippo pathway by mediating lactylation of TEAD1 and YAP1. The sequence is that of Alanine--tRNA ligase, cytoplasmic from Homo sapiens (Human).